Consider the following 469-residue polypeptide: Argininosuccinate lyase (469 aa).

This sequence belongs to the lyase 1 family. Argininosuccinate lyase subfamily.

The protein resides in the cytoplasm. The catalysed reaction is 2-(N(omega)-L-arginino)succinate = fumarate + L-arginine. It participates in amino-acid biosynthesis; L-arginine biosynthesis; L-arginine from L-ornithine and carbamoyl phosphate: step 3/3. This Burkholderia mallei (strain NCTC 10247) protein is Argininosuccinate lyase.